We begin with the raw amino-acid sequence, 200 residues long: ATP-dependent Clp protease proteolytic subunit 1 (200 aa).

S98 serves as the catalytic Nucleophile. The active site involves H123.

The protein belongs to the peptidase S14 family. Fourteen ClpP subunits assemble into 2 heptameric rings which stack back to back to give a disk-like structure with a central cavity, resembling the structure of eukaryotic proteasomes.

It is found in the cytoplasm. The catalysed reaction is Hydrolysis of proteins to small peptides in the presence of ATP and magnesium. alpha-casein is the usual test substrate. In the absence of ATP, only oligopeptides shorter than five residues are hydrolyzed (such as succinyl-Leu-Tyr-|-NHMec, and Leu-Tyr-Leu-|-Tyr-Trp, in which cleavage of the -Tyr-|-Leu- and -Tyr-|-Trp bonds also occurs).. Functionally, cleaves peptides in various proteins in a process that requires ATP hydrolysis. Has a chymotrypsin-like activity. Plays a major role in the degradation of misfolded proteins. This is ATP-dependent Clp protease proteolytic subunit 1 from Mycobacterium bovis (strain ATCC BAA-935 / AF2122/97).